The following is a 106-amino-acid chain: Movement protein TGB2 (106 aa).

At 1–8 the chain is on the cytoplasmic side; sequence MPLTPPPD. A helical transmembrane segment spans residues 9–29; sequence YTRVYTALAIGASIAFFTGLI. Residues 30–73 are Lumenal-facing; sequence TRNTLPSVGDLQHNLPHGGRYRDGTKSVEYCGPRKLNSVESGSR. A helical membrane pass occupies residues 74 to 94; sequence WTFQPWLLVIVLVALIIALGR. Residues 95-106 are Cytoplasmic-facing; that stretch reads QGHNCRACGRSH.

Belongs to the Tymovirales TGBp2 protein family.

It localises to the host endoplasmic reticulum membrane. Functionally, plays a role in viral cell-to-cell propagation, by facilitating genome transport to neighboring plant cells through plasmosdesmata,. The protein is Movement protein TGB2 of Lilium (LSV).